The primary structure comprises 250 residues: uncharacterized protein (250 aa).

The segment covering 207-226 has biased composition (basic and acidic residues); it reads LNDRDAINKSEEARKAREEV. The segment at 207-250 is disordered; the sequence is LNDRDAINKSEEARKAREEVFIPSEPSKPSIASKRSSASKSTKS. Low complexity predominate over residues 233–250; it reads SKPSIASKRSSASKSTKS.

Its subcellular location is the plastid. It localises to the chloroplast. This is an uncharacterized protein from Chlorella vulgaris (Green alga).